A 244-amino-acid chain; its full sequence is MSFTVYPALDIRNARVVRLLQGDYARETQYGDDVLPRAQAFADAGAQWMHLVDLDAAKAGGYTLAGTLGEIARATGLRVQTGGGVRSREDVARILDAGAARVVIGSLAVRNSEMVVGWLQEFGADRLTIALDTRQDADGIWQLPVHGWTEAADATLDQLAVRYARAGLQHLLCTDIARDGMLSGPNMALYGHLRALTPQLQVQVSGGARNLADVAAAKAAGCAGIVLGKALLEGHLNLDEALAC.

Residue aspartate 10 is the Proton acceptor of the active site. Aspartate 132 serves as the catalytic Proton donor.

This sequence belongs to the HisA/HisF family.

The protein localises to the cytoplasm. The catalysed reaction is 1-(5-phospho-beta-D-ribosyl)-5-[(5-phospho-beta-D-ribosylamino)methylideneamino]imidazole-4-carboxamide = 5-[(5-phospho-1-deoxy-D-ribulos-1-ylimino)methylamino]-1-(5-phospho-beta-D-ribosyl)imidazole-4-carboxamide. It participates in amino-acid biosynthesis; L-histidine biosynthesis; L-histidine from 5-phospho-alpha-D-ribose 1-diphosphate: step 4/9. This Xanthomonas axonopodis pv. citri (strain 306) protein is 1-(5-phosphoribosyl)-5-[(5-phosphoribosylamino)methylideneamino] imidazole-4-carboxamide isomerase.